A 91-amino-acid chain; its full sequence is Antifungal protein opdH (91 aa).

Residues 1 to 18 (MQFSSLSLVFLAVIGAIA) form the signal peptide. A propeptide spanning residues 19-33 (NPIAVDSELENRDVQ) is cleaved from the precursor. Cystine bridges form between cysteine 41-cysteine 69, cysteine 48-cysteine 76, and cysteine 61-cysteine 87.

This sequence belongs to the antifungal protein pafB family.

The protein resides in the secreted. It localises to the host cytoplasm. Functionally, antifungal protein; part of the gene cluster that mediates the biosynthesis of oxopyrrolidines, polyketide-amino acid hybrid compounds with feature structures of tetramic acid. Acts as an inhibitor of growth of various molds and yeasts. The chain is Antifungal protein opdH from Penicillium oxalicum (strain 114-2 / CGMCC 5302) (Penicillium decumbens).